The following is a 212-amino-acid chain: Pyridoxine/pyridoxamine 5'-phosphate oxidase (212 aa).

Residues 61 to 66 (RSVLLK), 76 to 77 (YT), Lys-83, and Gln-105 each bind FMN. Lys-66 lines the substrate pocket. Positions 123, 127, and 131 each coordinate substrate. Residues 140 to 141 (QS) and Trp-185 each bind FMN. 191-193 (RLH) contributes to the substrate binding site. An FMN-binding site is contributed by Arg-195.

It belongs to the pyridoxamine 5'-phosphate oxidase family. In terms of assembly, homodimer. Requires FMN as cofactor.

It carries out the reaction pyridoxamine 5'-phosphate + O2 + H2O = pyridoxal 5'-phosphate + H2O2 + NH4(+). The enzyme catalyses pyridoxine 5'-phosphate + O2 = pyridoxal 5'-phosphate + H2O2. The protein operates within cofactor metabolism; pyridoxal 5'-phosphate salvage; pyridoxal 5'-phosphate from pyridoxamine 5'-phosphate: step 1/1. It functions in the pathway cofactor metabolism; pyridoxal 5'-phosphate salvage; pyridoxal 5'-phosphate from pyridoxine 5'-phosphate: step 1/1. Its function is as follows. Catalyzes the oxidation of either pyridoxine 5'-phosphate (PNP) or pyridoxamine 5'-phosphate (PMP) into pyridoxal 5'-phosphate (PLP). This Dichelobacter nodosus (strain VCS1703A) protein is Pyridoxine/pyridoxamine 5'-phosphate oxidase.